The primary structure comprises 98 residues: NADH-ubiquinone oxidoreductase chain 4L (98 aa).

Transmembrane regions (helical) follow at residues 2 to 22, 29 to 49, and 61 to 81; these read PSIS…MLIF, SLLC…LTIL, and ILLL…LVTV.

The protein belongs to the complex I subunit 4L family. Core subunit of respiratory chain NADH dehydrogenase (Complex I) which is composed of 45 different subunits.

Its subcellular location is the mitochondrion inner membrane. It catalyses the reaction a ubiquinone + NADH + 5 H(+)(in) = a ubiquinol + NAD(+) + 4 H(+)(out). In terms of biological role, core subunit of the mitochondrial membrane respiratory chain NADH dehydrogenase (Complex I) which catalyzes electron transfer from NADH through the respiratory chain, using ubiquinone as an electron acceptor. Part of the enzyme membrane arm which is embedded in the lipid bilayer and involved in proton translocation. The polypeptide is NADH-ubiquinone oxidoreductase chain 4L (MT-ND4L) (Eulemur rubriventer (Red-bellied lemur)).